Consider the following 104-residue polypeptide: L-rhamnose mutarotase (104 aa).

Substrate is bound at residue tyrosine 18. Histidine 22 functions as the Proton donor in the catalytic mechanism. Substrate contacts are provided by residues tyrosine 41 and 76–77 (WW).

It belongs to the rhamnose mutarotase family. As to quaternary structure, homodimer.

Its subcellular location is the cytoplasm. The catalysed reaction is alpha-L-rhamnose = beta-L-rhamnose. The protein operates within carbohydrate metabolism; L-rhamnose metabolism. Involved in the anomeric conversion of L-rhamnose. The sequence is that of L-rhamnose mutarotase from Lactiplantibacillus plantarum (strain ATCC BAA-793 / NCIMB 8826 / WCFS1) (Lactobacillus plantarum).